The following is an 855-amino-acid chain: Valine--tRNA ligase (855 aa).

The 'HIGH' region motif lies at 44-54 (PNVTGVLHIGH). A 'KMSKS' region motif is present at residues 524 to 528 (KMSKT). Lysine 527 contacts ATP. Positions 797 to 827 (KVEEDPARKQKEREQLEKNIANSKRQLGDEV) form a coiled coil.

The protein belongs to the class-I aminoacyl-tRNA synthetase family. ValS type 1 subfamily. As to quaternary structure, monomer.

It localises to the cytoplasm. It carries out the reaction tRNA(Val) + L-valine + ATP = L-valyl-tRNA(Val) + AMP + diphosphate. Catalyzes the attachment of valine to tRNA(Val). As ValRS can inadvertently accommodate and process structurally similar amino acids such as threonine, to avoid such errors, it has a 'posttransfer' editing activity that hydrolyzes mischarged Thr-tRNA(Val) in a tRNA-dependent manner. The protein is Valine--tRNA ligase of Solibacter usitatus (strain Ellin6076).